We begin with the raw amino-acid sequence, 359 residues long: Protein Wnt-5b (359 aa).

Positions 1–17 are cleaved as a signal peptide; it reads MPSLLLVVVAALLSSWA. The cysteines at positions 83 and 94 are disulfide-linked. Asn93 and Asn99 each carry an N-linked (GlcNAc...) asparagine glycan. 10 cysteine pairs are disulfide-bonded: Cys133-Cys141, Cys143-Cys161, Cys217-Cys231, Cys219-Cys226, Cys288-Cys319, Cys304-Cys314, Cys318-Cys358, Cys334-Cys349, Cys336-Cys346, and Cys341-Cys342. Ser223 is lipidated: O-palmitoleoyl serine; by PORCN. N-linked (GlcNAc...) asparagine glycans are attached at residues Asn291 and Asn305.

This sequence belongs to the Wnt family. As to quaternary structure, interacts with PORCN. In terms of processing, palmitoleoylation is required for efficient binding to frizzled receptors. Depalmitoleoylation leads to Wnt signaling pathway inhibition.

The protein resides in the secreted. It localises to the extracellular space. It is found in the extracellular matrix. Its function is as follows. Ligand for members of the frizzled family of seven transmembrane receptors. Probable developmental protein. May be a signaling molecule which affects the development of discrete regions of tissues. Is likely to signal over only few cell diameters. This is Protein Wnt-5b (Wnt5b) from Mus musculus (Mouse).